Consider the following 176-residue polypeptide: RNA pyrophosphohydrolase (176 aa).

The Nudix hydrolase domain maps to 6–149 (GYRPNVGIVI…KRDVYRRVMK (144 aa)). The Nudix box motif lies at 38 to 59 (GGINPGESAEQAMYRELFEEVG).

The protein belongs to the Nudix hydrolase family. RppH subfamily. A divalent metal cation serves as cofactor.

Accelerates the degradation of transcripts by removing pyrophosphate from the 5'-end of triphosphorylated RNA, leading to a more labile monophosphorylated state that can stimulate subsequent ribonuclease cleavage. This chain is RNA pyrophosphohydrolase, found in Salmonella paratyphi C (strain RKS4594).